The following is a 492-amino-acid chain: Glutamyl-tRNA(Gln) amidotransferase subunit A (492 aa).

Residues Lys78 and Ser158 each act as charge relay system in the active site. Ser182 functions as the Acyl-ester intermediate in the catalytic mechanism.

The protein belongs to the amidase family. GatA subfamily. In terms of assembly, heterotrimer of A, B and C subunits.

The enzyme catalyses L-glutamyl-tRNA(Gln) + L-glutamine + ATP + H2O = L-glutaminyl-tRNA(Gln) + L-glutamate + ADP + phosphate + H(+). Allows the formation of correctly charged Gln-tRNA(Gln) through the transamidation of misacylated Glu-tRNA(Gln) in organisms which lack glutaminyl-tRNA synthetase. The reaction takes place in the presence of glutamine and ATP through an activated gamma-phospho-Glu-tRNA(Gln). The chain is Glutamyl-tRNA(Gln) amidotransferase subunit A from Rhodopseudomonas palustris (strain BisA53).